Consider the following 367-residue polypeptide: Voltage-gated potassium channel subunit beta-2 (367 aa).

Phosphoserine occurs at positions 9, 14, and 20. At arginine 28 the chain carries Asymmetric dimethylarginine; alternate. Position 28 is an omega-N-methylarginine; alternate (arginine 28). Serine 31 is modified (phosphoserine). Positions 56, 57, 63, and 85 each coordinate NADP(+). The active-site Proton donor/acceptor is the tyrosine 90. Serine 112 bears the Phosphoserine mark. Lysine 124 bears the N6-acetyllysine mark. NADP(+)-binding residues include asparagine 158, serine 188, arginine 189, glutamine 214, tryptophan 243, serine 244, proline 245, leucine 246, alanine 247, cysteine 248, lysine 254, tyrosine 262, arginine 264, glycine 323, serine 325, glutamine 329, glutamate 332, and asparagine 333.

It belongs to the shaker potassium channel beta subunit family. As to quaternary structure, homotetramer. Interaction with tetrameric potassium channel alpha subunits gives rise to a heterooctamer. Identified in potassium channel complexes containing KCNA1, KCNA2, KCNA4, KCNA5, KCNA6, KCNAB1, KCNAB2 and KCND3. Interacts (in unphosphorylated form) with MAPRE1. Forms a ternary complex with SQSTM1 and PRKCZ. Phosphorylated by PRKCZ; may be regulated by incorporation in a complex composed of PRKCZ and SQSTM1. In terms of tissue distribution, detected in brain. Detected at basket cell terminals in cerebellum and in the juxtaparanodal region of nodes of Ranvier (at protein level). Strongest expression in brain and eye. Highest levels in brain detected in brainstem and diencephalon. Strong expression also detected in lung and heart. Moderate expression in kidney, T-lymphocytes and skeletal muscle.

Its subcellular location is the cytoplasm. The protein localises to the membrane. It localises to the cell membrane. The protein resides in the cell projection. It is found in the axon. Its subcellular location is the synapse. The protein localises to the synaptosome. It localises to the cytoskeleton. The enzyme catalyses hydroxyacetone + NADP(+) = methylglyoxal + NADPH + H(+). It catalyses the reaction (E)-4-oxonon-2-en-1-ol + NADP(+) = (E)-4-oxonon-2-enal + NADPH + H(+). Regulatory subunit of the voltage-gated potassium (Kv) Shaker channel family. Shaker channels are composed of pore-forming and potassium-conducting alpha subunits and of regulatory beta subunits. The beta-2/KCNAB2 subunit promotes potassium channel closure via a mechanism that does not involve physical obstruction of the channel pore. Promotes the inactivation of Kv1.4/KCNA4 and Kv1.5/KCNA5 alpha subunit-containing channels. Displays nicotinamide adenine dinucleotide phosphate (NADPH)-dependent aldoketoreductase activity by catalyzing the NADPH-dependent reduction of a wide range of aldehyde and ketone substrates. Substrate specificity includes methylglyoxal, 9,10-phenanthrenequinone, prostaglandin J2, 4-nitrobenzaldehyde, 4-nitroacetophenone and 4-oxo-trans-2-nonenal (in vitro, no physiological substrate identified yet). The binding of oxidized and reduced nucleotide cofactors alters Kv channel gating and may contribute to dynamic fine tuning of cell excitability. Contributes to the regulation of nerve signaling, and prevents neuronal hyperexcitability. This Mus musculus (Mouse) protein is Voltage-gated potassium channel subunit beta-2.